A 104-amino-acid chain; its full sequence is Protamine-3 (104 aa).

Positions 1–104 are disordered; it reads MGSRCAKLST…PSPEPKQKHS (104 aa). The span at 45 to 70 shows a compositional bias: acidic residues; the sequence is EGEEEEEDEEDEEEEDDDEEDEEEEQ. The residue at position 96 (Ser-96) is a Phosphoserine.

This sequence belongs to the protamine P3 family. In terms of tissue distribution, testis.

The protein resides in the nucleus. It localises to the chromosome. Protamines substitute for histones in the chromatin of sperm during the haploid phase of spermatogenesis. They compact sperm DNA into a highly condensed, stable and inactive complex. This is Protamine-3 (Prm3) from Rattus norvegicus (Rat).